The chain runs to 152 residues: Large ribosomal subunit protein bL9 (152 aa).

Belongs to the bacterial ribosomal protein bL9 family.

Its function is as follows. Binds to the 23S rRNA. This Acaryochloris marina (strain MBIC 11017) protein is Large ribosomal subunit protein bL9.